The following is a 260-amino-acid chain: UPF0246 protein Veis_4789 (260 aa).

Belongs to the UPF0246 family.

This chain is UPF0246 protein Veis_4789, found in Verminephrobacter eiseniae (strain EF01-2).